The chain runs to 1188 residues: DNA-directed RNA polymerase II subunit 2 (1188 aa).

Asp-800 is a binding site for Mg(2+). 2 disordered regions span residues 852-871 and 877-897; these read SYDK…VSGE and KTTP…TRRD. The span at 879-892 shows a compositional bias: polar residues; the sequence is TPISQDEAQGQSSR. Zn(2+) is bound by residues Cys-1124, Cys-1127, Cys-1142, and Cys-1145. The C4-type zinc-finger motif lies at 1124-1145; sequence CEVCGLIAIANLKKNSFECRGC.

The protein belongs to the RNA polymerase beta chain family. Component of the RNA polymerase II complex consisting of at least 12 subunits.

It is found in the nucleus. It catalyses the reaction RNA(n) + a ribonucleoside 5'-triphosphate = RNA(n+1) + diphosphate. Functionally, DNA-dependent RNA polymerase catalyzes the transcription of DNA into RNA using the four ribonucleoside triphosphates as substrates. Second largest component of RNA polymerase II which synthesizes mRNA precursors and many functional non-coding RNAs. Proposed to contribute to the polymerase catalytic activity and forms the polymerase active center together with the largest subunit. Pol II is the central component of the basal RNA polymerase II transcription machinery. It is composed of mobile elements that move relative to each other. NRPB2 is part of the core element with the central large cleft, the clamp element that moves to open and close the cleft and the jaws that are thought to grab the incoming DNA template. In terms of biological role, essential for the completion of the three rounds of mitosis in female megaspores required for the development of mature gametophytes. This is DNA-directed RNA polymerase II subunit 2 (NRPB2) from Arabidopsis thaliana (Mouse-ear cress).